A 260-amino-acid polypeptide reads, in one-letter code: Pyridoxine 5'-phosphate synthase (260 aa).

Asn-15 contributes to the 3-amino-2-oxopropyl phosphate binding site. 17–18 is a 1-deoxy-D-xylulose 5-phosphate binding site; sequence DH. Residue Arg-26 coordinates 3-amino-2-oxopropyl phosphate. His-51 (proton acceptor) is an active-site residue. Residues Arg-53 and His-58 each contribute to the 1-deoxy-D-xylulose 5-phosphate site. Glu-78 serves as the catalytic Proton acceptor. Thr-108 is a 1-deoxy-D-xylulose 5-phosphate binding site. The active-site Proton donor is the His-199. Residues Gly-200 and 221-222 each bind 3-amino-2-oxopropyl phosphate; that span reads GH.

Belongs to the PNP synthase family. In terms of assembly, homooctamer; tetramer of dimers.

The protein localises to the cytoplasm. The catalysed reaction is 3-amino-2-oxopropyl phosphate + 1-deoxy-D-xylulose 5-phosphate = pyridoxine 5'-phosphate + phosphate + 2 H2O + H(+). Its pathway is cofactor biosynthesis; pyridoxine 5'-phosphate biosynthesis; pyridoxine 5'-phosphate from D-erythrose 4-phosphate: step 5/5. Catalyzes the complicated ring closure reaction between the two acyclic compounds 1-deoxy-D-xylulose-5-phosphate (DXP) and 3-amino-2-oxopropyl phosphate (1-amino-acetone-3-phosphate or AAP) to form pyridoxine 5'-phosphate (PNP) and inorganic phosphate. This Cupriavidus taiwanensis (strain DSM 17343 / BCRC 17206 / CCUG 44338 / CIP 107171 / LMG 19424 / R1) (Ralstonia taiwanensis (strain LMG 19424)) protein is Pyridoxine 5'-phosphate synthase.